A 1450-amino-acid polypeptide reads, in one-letter code: M-protein, striated muscle (1450 aa).

Positions 66–87 are disordered; the sequence is AHEAMQESRKRTHEQKSHASDE. Ig-like C2-type domains are found at residues 142-233 and 254-359; these read PEIL…CAVV and PLSY…AFLF. Fibronectin type-III domains lie at 373–468, 501–596, 602–695, 698–800, and 803–900; these read APMD…ALDP, PPTN…PQDI, APGR…VQAA, CPSY…TMPE, and PAYD…ASPG. 5 consecutive Ig-like C2-type domains span residues 899-995, 1002-1115, 1118-1204, 1225-1322, and 1333-1422; these read PGTK…LMTL, PTIP…FLRK, PHFS…LELS, PLKI…QRLK, and KVIG…VTVS.

Expressed in pectoralis and cardiac muscle.

Functionally, is a structural constituent of myofibrillar M-band in striated muscle. The sequence is that of M-protein, striated muscle from Gallus gallus (Chicken).